The sequence spans 185 residues: Elongation factor P (185 aa).

Belongs to the elongation factor P family.

The protein resides in the cytoplasm. The protein operates within protein biosynthesis; polypeptide chain elongation. In terms of biological role, involved in peptide bond synthesis. Stimulates efficient translation and peptide-bond synthesis on native or reconstituted 70S ribosomes in vitro. Probably functions indirectly by altering the affinity of the ribosome for aminoacyl-tRNA, thus increasing their reactivity as acceptors for peptidyl transferase. This Burkholderia multivorans (strain ATCC 17616 / 249) protein is Elongation factor P.